Consider the following 117-residue polypeptide: Transcription elongation factor A protein-like 8 (117 aa).

Composition is skewed to basic and acidic residues over residues 1–10 (MQKSCEENEG) and 61–75 (FKEDTPVRHLDPEEM). Residues 1 to 75 (MQKSCEENEG…PVRHLDPEEM (75 aa)) are disordered. Residues 73–100 (EEMIRGVDELERLREEIRRVRNKFVMMH) adopt a coiled-coil conformation.

The protein belongs to the TFS-II family. TFA subfamily.

It localises to the nucleus. In terms of biological role, may be involved in transcriptional regulation. The sequence is that of Transcription elongation factor A protein-like 8 (TCEAL8) from Homo sapiens (Human).